The chain runs to 198 residues: Sulfite reductase, dissimilatory-type subunit alpha (198 aa).

[4Fe-4S] cluster contacts are provided by Cys-45, Cys-64, Cys-67, and Cys-70. Residues 55 to 83 (GTLSIDNKNCTRCMHCINTMPRALKIGDE) enclose the 4Fe-4S ferredoxin-type domain.

In terms of assembly, heterohexamer of two alpha, two beta and two gamma subunits.

Functionally, part of the complex that catalyzes the reduction of sulfite to sulfide. The alpha and beta subunits may have arisen by gene duplication. They both bind 2 iron-sulfur clusters, but the alpha subunit seems to be catalytically inactive, due to substitutions along the putative substrate access channel, and because it binds sirohydrochlorin (the dematallated form of siroheme) instead of siroheme. In Megalodesulfovibrio gigas (strain ATCC 19364 / DSM 1382 / NCIMB 9332 / VKM B-1759) (Desulfovibrio gigas), this protein is Sulfite reductase, dissimilatory-type subunit alpha (dsrA).